The following is a 924-amino-acid chain: Lipoxygenase 7, chloroplastic (924 aa).

A chloroplast-targeting transit peptide spans M1–V61. The PLAT domain maps to A88–R218. The Lipoxygenase domain occupies T225 to I924. Residues T231–V315 form a disordered region. 2 stretches are compositionally biased toward basic and acidic residues: residues R239–D262 and S302–V315. Fe cation-binding residues include H581, H586, H773, N777, and I924.

Belongs to the lipoxygenase family. Requires Fe cation as cofactor.

It is found in the plastid. It localises to the chloroplast. It catalyses the reaction (9Z,12Z)-octadecadienoate + O2 = (13S)-hydroperoxy-(9Z,11E)-octadecadienoate. The enzyme catalyses (9Z,12Z,15Z)-octadecatrienoate + O2 = (13S)-hydroperoxy-(9Z,11E,15Z)-octadecatrienoate. Its pathway is lipid metabolism; oxylipin biosynthesis. Functionally, plant lipoxygenase may be involved in a number of diverse aspects of plant physiology including growth and development, pest resistance, and senescence or responses to wounding. This lipoxygenase introduces molecular oxygen exclusively into the C-13 position of linoleic and linolenic acids. The polypeptide is Lipoxygenase 7, chloroplastic (CM-LOX1) (Oryza sativa subsp. japonica (Rice)).